The primary structure comprises 175 residues: Receptor activity-modifying protein 2 (175 aa).

Positions 1–42 (MASLRVERAGGPRLPRTRVGRPAALRLLLLLGAVLNPHEALA) are cleaved as a signal peptide. Over 43-143 (QPLPTTGTPG…VQPTFSDPPE (101 aa)) the chain is Extracellular. 2 cysteine pairs are disulfide-bonded: C68/C99 and C84/C131. A glycan (N-linked (GlcNAc...) asparagine) is linked at N130. A helical transmembrane segment spans residues 144-165 (DVLLAMIIAPICLIPFLITLVV). Topologically, residues 166–175 (WRSKDSEAQA) are cytoplasmic.

It belongs to the RAMP family. Heterodimer of CALCRL and RAMP2; the interaction forms the receptor complex for adrenomedullin/ADM. Heterodimer of CALCR and RAMP2; interaction forms the AMYR2 receptor complex for calcitonin/CALC and amylin/IAPP. Strongly expressed in lung, breast, immune system and fetal tissues.

It is found in the cell membrane. In terms of biological role, accessory protein that interacts with and modulates the function of G-protein coupled receptors including calcitonin gene-related peptide type 1 receptor (CALCRL) and calcitonin receptor (CALCR). Required for the transport of CALCRL to the plasma membrane. Together with CALCRL, form a receptor complex for adrenomedullin/ADM. Together with CALCR, act as a receptor complex for calcitonin/CT/CALC. Together with CALCR, also act as a receptor complex for amylin/IAPP. The protein is Receptor activity-modifying protein 2 of Homo sapiens (Human).